Consider the following 539-residue polypeptide: Netrin-G1 (539 aa).

Positions 1–28 are cleaved as a signal peptide; it reads MYLSRFLSIHALWVTVSSVMQPYPLVWG. 3 disulfides stabilise this stretch: Cys33–Cys50, Cys72–Cys92, and Cys80–Cys88. Positions 46-296 constitute a Laminin N-terminal domain; the sequence is DYMACQPEST…AISDIKVRGR (251 aa). The segment at 80–91 is NGL discriminant loop I; the sequence is CAMGNPYMCNNE. A glycan (N-linked (GlcNAc...) asparagine) is linked at Asn133. Cys182 and Cys206 are disulfide-bonded. The segment at 208 to 214 is NGL discriminant loop II; the sequence is EEYSTGY. The interval 273–275 is NGL discriminant loop III; the sequence is EIF. Cystine bridges form between Cys297–Cys306, Cys299–Cys315, Cys317–Cys326, Cys329–Cys354, Cys364–Cys373, Cys366–Cys384, Cys387–Cys396, Cys399–Cys417, Cys420–Cys432, Cys422–Cys438, Cys440–Cys449, Cys452–Cys462, Cys467–Cys480, Cys474–Cys486, and Cys488–Cys497. 3 Laminin EGF-like domains span residues 297–356, 364–419, and 420–469; these read CKCN…TCIP, CECF…VCIE, and CYCN…VCDN. N-linked (GlcNAc...) asparagine glycosylation occurs at Asn320. Asn406 is a glycosylation site (N-linked (GlcNAc...) asparagine). Asn433 carries N-linked (GlcNAc...) asparagine glycosylation. Ser510 carries GPI-anchor amidated serine lipidation. A propeptide spans 511 to 539 (removed in mature form); sequence DSGQGAPPHGSPALLLLTTLLGTASPLVF.

As to quaternary structure, interacts with NGL1. N-glycosylated. Highly expressed in the thalamus, with very low expression, if any, in other tissues.

It is found in the cell membrane. In terms of biological role, involved in controlling patterning and neuronal circuit formation at the laminar, cellular, subcellular and synaptic levels. Promotes neurite outgrowth of both axons and dendrites. This is Netrin-G1 (NTNG1) from Homo sapiens (Human).